The sequence spans 188 residues: U1 small nuclear ribonucleoprotein C-2 (188 aa).

The Matrin-type zinc finger occupies 4–36; sequence YYCDYCDVFLVSESPSVRKAHNSGRNHLTNVRD. The tract at residues 57–188 is disordered; it reads FETGGGNSTS…MNPDRARQLG (132 aa). Pro residues predominate over residues 72–82; the sequence is GNPPGSQPGPP. Over residues 109–124 the composition is skewed to low complexity; the sequence is AMLALMNGQNGMSSPG. The span at 125–141 shows a compositional bias: pro residues; it reads SGPPPMRFAGPPIPNNM.

This sequence belongs to the U1 small nuclear ribonucleoprotein C family. In terms of assembly, U1 snRNP is composed of the 7 core Sm proteins B/B', D1, D2, D3, E, F and G that assemble in a heptameric protein ring on the Sm site of the small nuclear RNA to form the core snRNP, and at least 3 U1 snRNP-specific proteins U1-70K, U1-A and U1-C. U1-C interacts with U1 snRNA and the 5' splice-site region of the pre-mRNA.

The protein localises to the nucleus. Component of the spliceosomal U1 snRNP, which is essential for recognition of the pre-mRNA 5' splice-site and the subsequent assembly of the spliceosome. U1-C is directly involved in initial 5' splice-site recognition for both constitutive and regulated alternative splicing. The interaction with the 5' splice-site seems to precede base-pairing between the pre-mRNA and the U1 snRNA. Stimulates commitment or early (E) complex formation by stabilizing the base pairing of the 5' end of the U1 snRNA and the 5' splice-site region. This chain is U1 small nuclear ribonucleoprotein C-2, found in Puccinia graminis f. sp. tritici (strain CRL 75-36-700-3 / race SCCL) (Black stem rust fungus).